A 362-amino-acid chain; its full sequence is Phosphoserine aminotransferase (362 aa).

L-glutamate is bound at residue R42. Pyridoxal 5'-phosphate is bound by residues 76–77 (AR), W102, T153, D174, and Q197. K198 carries the N6-(pyridoxal phosphate)lysine modification. 239 to 240 (NT) is a binding site for pyridoxal 5'-phosphate.

The protein belongs to the class-V pyridoxal-phosphate-dependent aminotransferase family. SerC subfamily. As to quaternary structure, homodimer. Pyridoxal 5'-phosphate serves as cofactor.

The protein localises to the cytoplasm. It catalyses the reaction O-phospho-L-serine + 2-oxoglutarate = 3-phosphooxypyruvate + L-glutamate. The enzyme catalyses 4-(phosphooxy)-L-threonine + 2-oxoglutarate = (R)-3-hydroxy-2-oxo-4-phosphooxybutanoate + L-glutamate. The protein operates within amino-acid biosynthesis; L-serine biosynthesis; L-serine from 3-phospho-D-glycerate: step 2/3. Its pathway is cofactor biosynthesis; pyridoxine 5'-phosphate biosynthesis; pyridoxine 5'-phosphate from D-erythrose 4-phosphate: step 3/5. Its function is as follows. Catalyzes the reversible conversion of 3-phosphohydroxypyruvate to phosphoserine and of 3-hydroxy-2-oxo-4-phosphonooxybutanoate to phosphohydroxythreonine. The chain is Phosphoserine aminotransferase from Xenorhabdus nematophila (strain ATCC 19061 / DSM 3370 / CCUG 14189 / LMG 1036 / NCIMB 9965 / AN6).